The chain runs to 119 residues: MISKIDKNKVRLKRHARVRTNLSGTAEKPRLNVYRSNKHIYAQIIDDNKGVTLAQASSKDSDIATTATKVELATKVGEAIAKKAADKGIKEIVFDRGGYLYHGRVKALAEAARESGLEF.

It belongs to the universal ribosomal protein uL18 family. As to quaternary structure, part of the 50S ribosomal subunit; part of the 5S rRNA/L5/L18/L25 subcomplex. Contacts the 5S and 23S rRNAs.

In terms of biological role, this is one of the proteins that bind and probably mediate the attachment of the 5S RNA into the large ribosomal subunit, where it forms part of the central protuberance. The chain is Large ribosomal subunit protein uL18 from Staphylococcus aureus (strain Mu3 / ATCC 700698).